A 129-amino-acid chain; its full sequence is Putative protein p14 (129 aa).

This is Putative protein p14 (14) from Acyrthosiphon pisum secondary endosymbiont phage 1 (Bacteriophage APSE-1).